Consider the following 317-residue polypeptide: L-lactate dehydrogenase 2 (317 aa).

NAD(+)-binding positions include Val-16, Asp-37, Lys-42, Tyr-68, and 82-83 (GA). Gln-85 and Arg-91 together coordinate substrate. Residues Thr-104, 121-123 (ASN), and Thr-146 contribute to the NAD(+) site. 123–126 (NPVD) is a substrate binding site. 151 to 154 (DTTR) serves as a coordination point for substrate. 2 residues coordinate beta-D-fructose 1,6-bisphosphate: Arg-156 and His-171. Residue His-178 is the Proton acceptor of the active site. Tyr-223 is modified (phosphotyrosine). Thr-232 is a substrate binding site.

This sequence belongs to the LDH/MDH superfamily. LDH family. As to quaternary structure, homotetramer.

The protein resides in the cytoplasm. It carries out the reaction (S)-lactate + NAD(+) = pyruvate + NADH + H(+). It functions in the pathway fermentation; pyruvate fermentation to lactate; (S)-lactate from pyruvate: step 1/1. With respect to regulation, allosterically activated by fructose 1,6-bisphosphate (FBP). Catalyzes the conversion of lactate to pyruvate. The chain is L-lactate dehydrogenase 2 from Enterococcus faecalis (strain ATCC 700802 / V583).